Consider the following 480-residue polypeptide: MSSQVSSPVRVRFAPSPTGYLHVGGARTALFNWLYARHVGGTLVLRIEDTDLERSTPEMVEGILVGMRWLGLNWDEGPYYQTQRMDLYKAAAEKLVASGHAYYCFCSKEGLEQRRKAATAAGRAPQYDESCRKIGREDAAARKQGGAPCAVRFAVPETGNTKFQDAVFGEVEFANPELEDFVLLRSDGVPTYHLSVVVDDVDMKISHILRGADHISNTPKQVLLYQAMGATLPIFAHVPLILGPDKTRLSKRHGATSVISYSDEGIVPEAFRNFLALLGWTAPEGSPEKLGDEELIKLFSLEGISHSNAVFDRPKLDWFNTEYIRAYPAEKLLPLIQKEWQKVGLTPANPDAQHLVATIELLKPRARNLKDFAGSFKAFFTDDYANDPEAVEKFLKDPAVREMLVELGERYANAGEFTEQSTEQVLRDLAAEKGVKAGGLINGARVALTGQAVAPSLFAVMVNLGREKTVSRLRRAKEIQ.

Positions 15-25 match the 'HIGH' region motif; the sequence is PSPTGYLHVGG. The short motif at 248–252 is the 'KMSKS' region element; that stretch reads RLSKR. K251 contributes to the ATP binding site.

Belongs to the class-I aminoacyl-tRNA synthetase family. Glutamate--tRNA ligase type 1 subfamily. Monomer.

The protein resides in the cytoplasm. It catalyses the reaction tRNA(Glu) + L-glutamate + ATP = L-glutamyl-tRNA(Glu) + AMP + diphosphate. Catalyzes the attachment of glutamate to tRNA(Glu) in a two-step reaction: glutamate is first activated by ATP to form Glu-AMP and then transferred to the acceptor end of tRNA(Glu). The chain is Glutamate--tRNA ligase 2 from Koribacter versatilis (strain Ellin345).